Reading from the N-terminus, the 695-residue chain is NADPH--cytochrome P450 reductase (695 aa).

Residues 1-8 (MAQLDTLD) are Lumenal-facing. A helical membrane pass occupies residues 9–31 (LVVLVVLLVGSAAYFTKGTYWAV). Residues 32–695 (PKDPYAASGP…SGSYQEDVWS (664 aa)) lie on the Cytoplasmic side of the membrane. The Flavodoxin-like domain occupies 66-221 (CVIFYGSQTG…DFLAWKEPMW (156 aa)). Residues 72 to 77 (SQTGTA), 123 to 126 (ATYG), 169 to 178 (LGNNTYEHYQ), and Asp204 each bind FMN. Residues 277 to 538 (HNPFIAPIVE…HVRHSNFKLP (262 aa)) form the FAD-binding FR-type domain. Position 296 (Arg296) interacts with NADP(+). Residues 451 to 454 (RYYS), 469 to 471 (TAV), and 486 to 489 (GVTT) contribute to the FAD site. NADP(+)-binding positions include Thr552, 614 to 615 (SR), 620 to 624 (KVYVQ), and Glu656. Residue Trp694 coordinates FAD.

The protein belongs to the NADPH--cytochrome P450 reductase family. In the N-terminal section; belongs to the flavodoxin family. This sequence in the C-terminal section; belongs to the flavoprotein pyridine nucleotide cytochrome reductase family. It depends on FAD as a cofactor. FMN is required as a cofactor.

It is found in the endoplasmic reticulum membrane. It localises to the mitochondrion outer membrane. The protein resides in the cell membrane. The enzyme catalyses 2 oxidized [cytochrome P450] + NADPH = 2 reduced [cytochrome P450] + NADP(+) + H(+). Its function is as follows. This enzyme is required for electron transfer from NADP to cytochrome P450 in microsomes. It can also provide electron transfer to heme oxygenase and cytochrome B5. Involved in ergosterol biosynthesis. This chain is NADPH--cytochrome P450 reductase, found in Aspergillus terreus (strain NIH 2624 / FGSC A1156).